Reading from the N-terminus, the 352-residue chain is Phenylalanine--tRNA ligase alpha subunit (352 aa).

Glu-258 is a binding site for Mg(2+).

Belongs to the class-II aminoacyl-tRNA synthetase family. Phe-tRNA synthetase alpha subunit type 1 subfamily. Tetramer of two alpha and two beta subunits. It depends on Mg(2+) as a cofactor.

Its subcellular location is the cytoplasm. The enzyme catalyses tRNA(Phe) + L-phenylalanine + ATP = L-phenylalanyl-tRNA(Phe) + AMP + diphosphate + H(+). The protein is Phenylalanine--tRNA ligase alpha subunit of Staphylococcus haemolyticus (strain JCSC1435).